A 415-amino-acid chain; its full sequence is Histidine--tRNA ligase (415 aa).

It belongs to the class-II aminoacyl-tRNA synthetase family. In terms of assembly, homodimer.

It is found in the cytoplasm. It carries out the reaction tRNA(His) + L-histidine + ATP = L-histidyl-tRNA(His) + AMP + diphosphate + H(+). In Clostridium botulinum (strain Kyoto / Type A2), this protein is Histidine--tRNA ligase.